The following is a 448-amino-acid chain: DEAD-box ATP-dependent RNA helicase CshB (448 aa).

The short motif at 4–32 (HPFEQFNLESSLIDAVKDLNFEKPTEIQN) is the Q motif element. In terms of domain architecture, Helicase ATP-binding spans 35-206 (IPRILKRTNL…NKYLSHPEYV (172 aa)). 48 to 55 (SQTGTGKS) contributes to the ATP binding site. The DEAD box signature appears at 154-157 (DEAD). In terms of domain architecture, Helicase C-terminal spans 236–386 (NLIDILNPYL…EVKAHNQRQA (151 aa)). Positions 400-418 (NKVRSKIKNKVKPGYKKKF) are enriched in basic residues. The segment at 400 to 448 (NKVRSKIKNKVKPGYKKKFKQEVEKMKRQERKQFSKQQNRQKRKQNKKG) is disordered. Over residues 419-432 (KQEVEKMKRQERKQ) the composition is skewed to basic and acidic residues. Residues 438–448 (NRQKRKQNKKG) show a composition bias toward basic residues.

It belongs to the DEAD box helicase family. CshB subfamily.

The protein resides in the cytoplasm. The catalysed reaction is ATP + H2O = ADP + phosphate + H(+). Probable DEAD-box RNA helicase. May work in conjunction with the cold shock proteins to ensure proper initiation of transcription at low and optimal temperatures. This is DEAD-box ATP-dependent RNA helicase CshB from Staphylococcus aureus (strain NCTC 8325 / PS 47).